Here is a 415-residue protein sequence, read N- to C-terminus: MNIDRIDKPTREQYEEYILKNQPFIITGVVNNWISFNKKWIPSQNIEDDYFLSILENKGIPVREIGIDVGEWLGKTKNINFSIFWKKWREHYFNFKNEKNNQSNNNNNNNNNNNNNNNNNNNNNNNNNNNNNNNNNNKPKYYLASLPIQTYFKELINDFEIPEIPKEQNKNGNLWIGFKDQITPLHHDWSSGDPGMDGLHAIIIGRKQFKLFDPIVNVNCFKRKKEWGKFHQSEFDLDNPDFNKFPEAKNFKIIEIQLNQGEMLFIPKLWWHHVKTLEPSISINFWFQHIGSELLKSNKLWCHMEQYLNAVFEMDATKISNDKFKKIIKYLTNDNNGGDGDGDGDGDQIIQKYKDDNLKLIQLPKFIDSFSNAVNNPIFKNHPKKDQFKFEITEKVNQWIEEKKKEINENKIVIL.

Residues 97 to 140 (NEKNNQSNNNNNNNNNNNNNNNNNNNNNNNNNNNNNNNNNNKPK) form a disordered region. Residues 104–137 (NNNNNNNNNNNNNNNNNNNNNNNNNNNNNNNNNN) show a composition bias toward low complexity. Residues 127 to 302 (NNNNNNNNNN…ELLKSNKLWC (176 aa)) form the JmjC domain.

The polypeptide is JmjC domain-containing protein C (jcdC) (Dictyostelium discoideum (Social amoeba)).